The sequence spans 180 residues: Non-structural protein 4 (180 aa).

2 consecutive transmembrane segments (helical) span residues valine 16–isoleucine 36 and isoleucine 52–glycine 72.

The protein resides in the host membrane. This is Non-structural protein 4 (Segment-11) from Banna virus (BAV).